The following is a 267-amino-acid chain: Small ribosomal subunit protein uS5 (267 aa).

A disordered region spans residues 1 to 37; that stretch reads MADEAPARSGFRGGFGSRGGRGGRGRGRGRWARGRGK. Over residues 11-20 the composition is skewed to gly residues; it reads FRGGFGSRGG. The span at 21–34 shows a compositional bias: basic residues; it reads RGGRGRGRGRWARG. Serine 60 is subject to Phosphoserine. The S5 DRBM domain occupies 85–148; that stretch reads LKDEVLKIMP…ILAKLSVVPV (64 aa).

It belongs to the universal ribosomal protein uS5 family.

Its function is as follows. Component of the ribosome, a large ribonucleoprotein complex responsible for the synthesis of proteins in the cell. The small ribosomal subunit (SSU) binds messenger RNAs (mRNAs) and translates the encoded message by selecting cognate aminoacyl-transfer RNA (tRNA) molecules. The large subunit (LSU) contains the ribosomal catalytic site termed the peptidyl transferase center (PTC), which catalyzes the formation of peptide bonds, thereby polymerizing the amino acids delivered by tRNAs into a polypeptide chain. The nascent polypeptides leave the ribosome through a tunnel in the LSU and interact with protein factors that function in enzymatic processing, targeting, and the membrane insertion of nascent chains at the exit of the ribosomal tunnel. Plays a role in the assembly and function of the 40S ribosomal subunit. Mutations in this protein affects the control of translational fidelity. Involved in nucleolar processing of pre-18S ribosomal RNA and ribosome assembly. Has a specific developmental role during oogenesis. The sequence is that of Small ribosomal subunit protein uS5 (RpS2) from Drosophila melanogaster (Fruit fly).